Consider the following 149-residue polypeptide: Large ribosomal subunit protein bL9 (149 aa).

This sequence belongs to the bacterial ribosomal protein bL9 family.

Binds to the 23S rRNA. The protein is Large ribosomal subunit protein bL9 of Aliivibrio fischeri (strain ATCC 700601 / ES114) (Vibrio fischeri).